The chain runs to 163 residues: MKKKSGLSFLWLSAVAFVIDLLTKYLVTQNFELYESVNILPVFNLTYARNTGAAFSFLAEHGGWQKYFFIALALIISAVLVYLLRKNSARQKLQNSAYALIIGGALANMADRAYHGFVVDFFDFYWREWHYPVFNVADIAICVGVGLLILDSFKNGEKKANEQ.

3 consecutive transmembrane segments (helical) span residues 7–27 (LSFL…KYLV), 64–84 (WQKY…VYLL), and 99–119 (ALII…GFVV). Active-site residues include aspartate 120 and aspartate 138. The chain crosses the membrane as a helical span at residues 133–153 (VFNVADIAICVGVGLLILDSF).

The protein belongs to the peptidase A8 family.

The protein resides in the cell inner membrane. It carries out the reaction Release of signal peptides from bacterial membrane prolipoproteins. Hydrolyzes -Xaa-Yaa-Zaa-|-(S,diacylglyceryl)Cys-, in which Xaa is hydrophobic (preferably Leu), and Yaa (Ala or Ser) and Zaa (Gly or Ala) have small, neutral side chains.. Its pathway is protein modification; lipoprotein biosynthesis (signal peptide cleavage). In terms of biological role, this protein specifically catalyzes the removal of signal peptides from prolipoproteins. The sequence is that of Lipoprotein signal peptidase from Actinobacillus succinogenes (strain ATCC 55618 / DSM 22257 / CCUG 43843 / 130Z).